The chain runs to 252 residues: Imidazole glycerol phosphate synthase subunit HisF (252 aa).

Active-site residues include Asp11 and Asp130.

Belongs to the HisA/HisF family. In terms of assembly, heterodimer of HisH and HisF.

Its subcellular location is the cytoplasm. The enzyme catalyses 5-[(5-phospho-1-deoxy-D-ribulos-1-ylimino)methylamino]-1-(5-phospho-beta-D-ribosyl)imidazole-4-carboxamide + L-glutamine = D-erythro-1-(imidazol-4-yl)glycerol 3-phosphate + 5-amino-1-(5-phospho-beta-D-ribosyl)imidazole-4-carboxamide + L-glutamate + H(+). Its pathway is amino-acid biosynthesis; L-histidine biosynthesis; L-histidine from 5-phospho-alpha-D-ribose 1-diphosphate: step 5/9. Functionally, IGPS catalyzes the conversion of PRFAR and glutamine to IGP, AICAR and glutamate. The HisF subunit catalyzes the cyclization activity that produces IGP and AICAR from PRFAR using the ammonia provided by the HisH subunit. The protein is Imidazole glycerol phosphate synthase subunit HisF of Hyphomonas neptunium (strain ATCC 15444).